Consider the following 212-residue polypeptide: Protein-L-isoaspartate O-methyltransferase (212 aa).

S60 is an active-site residue.

Belongs to the methyltransferase superfamily. L-isoaspartyl/D-aspartyl protein methyltransferase family.

The protein resides in the cytoplasm. The catalysed reaction is [protein]-L-isoaspartate + S-adenosyl-L-methionine = [protein]-L-isoaspartate alpha-methyl ester + S-adenosyl-L-homocysteine. Its function is as follows. Catalyzes the methyl esterification of L-isoaspartyl residues in peptides and proteins that result from spontaneous decomposition of normal L-aspartyl and L-asparaginyl residues. It plays a role in the repair and/or degradation of damaged proteins. This Methanococcus maripaludis (strain DSM 14266 / JCM 13030 / NBRC 101832 / S2 / LL) protein is Protein-L-isoaspartate O-methyltransferase.